The sequence spans 218 residues: Mitochondrial fission factor (218 aa).

The Cytoplasmic portion of the chain corresponds to 1–198 (MAEISRIQYE…ENKERAKREM (198 aa)). Threonine 89 is subject to Phosphothreonine. 4 positions are modified to phosphoserine: serine 129, serine 131, serine 146, and serine 171. The stretch at 167-198 (VDAASLRRQIIKLNRRLQLLEEENKERAKREM) forms a coiled coil. A helical; Anchor for type IV membrane protein transmembrane segment spans residues 199–216 (VMYSITVAFWLLNSWLWF). Over 217-218 (RR) the chain is Mitochondrial intermembrane.

This sequence belongs to the Tango11 family. As to quaternary structure, homodimer. Interacts with DNM1L. Interacts with C11orf65/MFI; the interaction inhibits MFF interaction with DNM1L.

It localises to the mitochondrion outer membrane. The protein localises to the peroxisome. It is found in the cytoplasmic vesicle. The protein resides in the secretory vesicle. Its subcellular location is the synaptic vesicle. In terms of biological role, plays a role in mitochondrial and peroxisomal fission. Promotes the recruitment and association of the fission mediator dynamin-related protein 1 (DNM1L) to the mitochondrial surface. May be involved in regulation of synaptic vesicle membrane dynamics by recruitment of DNM1L to clathrin-containing vesicles. This chain is Mitochondrial fission factor (MFF), found in Bos taurus (Bovine).